Consider the following 206-residue polypeptide: 2,3-bisphosphoglycerate-dependent phosphoglycerate mutase (206 aa).

Residues 9 to 16 (RHGQSEWN), 22 to 23 (TG), Arg61, 88 to 91 (ERDY), Lys99, 115 to 116 (RR), and 159 to 160 (GN) each bind substrate. His10 (tele-phosphohistidine intermediate) is an active-site residue. Glu88 functions as the Proton donor/acceptor in the catalytic mechanism.

Belongs to the phosphoglycerate mutase family. BPG-dependent PGAM subfamily. As to quaternary structure, homodimer.

The catalysed reaction is (2R)-2-phosphoglycerate = (2R)-3-phosphoglycerate. Its pathway is carbohydrate degradation; glycolysis; pyruvate from D-glyceraldehyde 3-phosphate: step 3/5. Catalyzes the interconversion of 2-phosphoglycerate and 3-phosphoglycerate. The sequence is that of 2,3-bisphosphoglycerate-dependent phosphoglycerate mutase from Bartonella quintana (strain Toulouse) (Rochalimaea quintana).